A 373-amino-acid chain; its full sequence is MSEQDQELRNRQAQFAKELHGESVERSGLTALLGKNREAQQEAVAKYLRHWDGATDAEAEERRLADYNESTHSYYNVVTDFYEYGWGASFHFSRFYTGESFAMSMARHEHYLAHRAGITSGDLVLDVGCGVGGPAREIARFTGCRVVGLNNNDYQIMKGKHYSRKLGLGDQVSYVKGDFMNMDFPDATFDKVYAIEATCHAPSFEGVYGEIYRVLKPGGVFAVYEWVMTENYDETNPEHRRIAYDIELGDGIPKMYSVKVARDALAKVGFEILVDEDRADNDDPVPWYYPLTGEWAYIQTIADLGTFVRTSALGRRVTSAFVSLMETLRLAPRGSSEVVNALESAAAGLVAGGKSKLFTPMMLFVARKPETAE.

This sequence belongs to the class I-like SAM-binding methyltransferase superfamily. Erg6/SMT family.

The enzyme catalyses zymosterol + S-adenosyl-L-methionine = fecosterol + S-adenosyl-L-homocysteine + H(+). The protein operates within steroid metabolism; ergosterol biosynthesis; ergosterol from zymosterol: step 1/5. Functionally, catalyzes the methyl transfer from S-adenosyl-methionine to the C-24 of zymosterol to form fecosterol. This chain is Sterol 24-C-methyltransferase (ERG6), found in Eremothecium gossypii (strain ATCC 10895 / CBS 109.51 / FGSC 9923 / NRRL Y-1056) (Yeast).